A 227-amino-acid chain; its full sequence is Testis expressed protein 56 (227 aa).

As to expression, expressed predominantly in the testis.

The polypeptide is Testis expressed protein 56 (Mus musculus (Mouse)).